Here is a 560-residue protein sequence, read N- to C-terminus: Secreted RxLR effector protein 142 (560 aa).

A signal peptide spans 1 to 22 (MRRAYFVAIALLVAAGGKTAAG). Disordered stretches follow at residues 48 to 73 (QSQN…ERTP) and 354 to 377 (INRP…LNNQ). Over residues 54–72 (ESRDPKDDLKLSAGNEERT) the composition is skewed to basic and acidic residues. Positions 56–71 (RDPKDDLKLSAGNEER) match the RxLR-dEER motif. Residues 361 to 377 (GPSTNGATTSNGGLNNQ) are compositionally biased toward polar residues.

It belongs to the RxLR effector family.

Its subcellular location is the secreted. It is found in the host nucleus. Its function is as follows. Secreted effector that completely suppresses the host cell death induced by cell death-inducing proteins. The sequence is that of Secreted RxLR effector protein 142 from Plasmopara viticola (Downy mildew of grapevine).